The chain runs to 367 residues: Adenine deaminase (367 aa).

Residues histidine 19, histidine 21, and histidine 209 each coordinate Zn(2+). Glutamate 212 functions as the Proton donor in the catalytic mechanism. Aspartate 290 serves as a coordination point for Zn(2+). Aspartate 291 provides a ligand contact to substrate.

The protein belongs to the metallo-dependent hydrolases superfamily. Adenosine and AMP deaminases family. Adenine deaminase type 2 subfamily. Requires Zn(2+) as cofactor.

The protein localises to the cytoplasm. It localises to the nucleus. The enzyme catalyses adenine + H2O + H(+) = hypoxanthine + NH4(+). In terms of biological role, catalyzes the hydrolytic deamination of adenine to hypoxanthine. Plays an important role in the purine salvage pathway and in nitrogen catabolism. Also exhibits a low activity towards N(6)-substituted adenines that are commonly known as the plant hormones cytokinins. The sequence is that of Adenine deaminase from Schizosaccharomyces pombe (strain 972 / ATCC 24843) (Fission yeast).